The sequence spans 270 residues: uncharacterized protein (270 aa).

To T.pallidum TP_0127, TP_0315 and TP_0618.

This is an uncharacterized protein from Treponema pallidum (strain Nichols).